Here is an 853-residue protein sequence, read N- to C-terminus: Eukaryotic translation initiation factor 3 subunit C (853 aa).

A disordered region spans residues 1–78 (MSRFFAASDS…EDEDQNKVLK (78 aa)). Positions 11-46 (SSEESSEEELYSDNEASAQEDSDKDSDDDDSDDDDS) are enriched in acidic residues. The 175-residue stretch at 599–773 (FHMHINLELL…SAIIFRKGVE (175 aa)) folds into the PCI domain. The segment at 798 to 853 (TLEQRTQGTANAFERQGGRGGRGGGRGRGGGRGGGVPRGGRNQQFTGGALGRAIQA) is disordered. A compositionally biased stretch (gly residues) spans 815–835 (GRGGRGGGRGRGGGRGGGVPR).

The protein belongs to the eIF-3 subunit C family. As to quaternary structure, component of the eukaryotic translation initiation factor 3 (eIF-3) complex.

The protein resides in the cytoplasm. In terms of biological role, component of the eukaryotic translation initiation factor 3 (eIF-3) complex, which is involved in protein synthesis of a specialized repertoire of mRNAs and, together with other initiation factors, stimulates binding of mRNA and methionyl-tRNAi to the 40S ribosome. The eIF-3 complex specifically targets and initiates translation of a subset of mRNAs involved in cell proliferation. This chain is Eukaryotic translation initiation factor 3 subunit C, found in Phaeosphaeria nodorum (strain SN15 / ATCC MYA-4574 / FGSC 10173) (Glume blotch fungus).